The following is a 1386-amino-acid chain: MACSIVQFCSFQDLQSARDFLFPQLREETPGALRRDPSKTSNWEDDSWGAWEETEPQEPEEEGNTSKTQKHSWLQECVLSLSPTSDLMVIAREQKAAFLVRKWKHSDKGKEEMQFAVGWSGSVSAEEGEYVTSALCIPLASQKRSSTGRPDWTCIVVGFTSGYVRFYTEGVLLLAQLLNEDRVLQLKCRTYEIPRHPGVTEQNEELSILYPAAIVTIDGFSLFQSLRACRNQVAKAAASGNENIQPPPLAYKKWGLQDIDTIIDHASIGIMTLSPFDQMKTASNIGGFNAAIKNSPPAMSQYITVGSSPFTGFFYALEGSTQPLLSHVALAVASKLTSALFSAASGWLGWKSKHEEETVQKQKPKMEPATPLAVRFGLPDSRRHGESICLSPCNTLAAVTDDFGRVILLDVARGIAIRMWKGYRDAQIGWIQIVEDLHERVPEKGDFSPFGNTQGPSRVAQFLVIYAPRRGILEVWSTQQGPRVGAFNVGKHCRLLYPGYKIMGLNNVTSQSWQPQTYQICLVDPVSASVKAVNVPFHLALSDKKSERAKDLHLVKKLAALLRAKSPRPDSFEAEIKELILDIKYPATKKQALESILASDRVSFSCLRNVTQTSMDTLKNQELESVDEGLLQFCASKLKLLHLYESVSQLNTLDFHSDTPFSDNDLAVLLRLDDKELLKLRALLEKYKQENTKATVRFSEDADGVLPVKTFLEYLDYEKDALSIRKTSEEECVALGSFFFWKCLHGESSTEDMCHTLESAGLSPQQLLSLLLSVWLSKEKDILDKPQSVCCLHTMLSLLSKMKVAIDETWDSQSVSPWWQQMRMACIQSENNGAALLSAHVGHSVAAQMSSSATDKKFSQMVLDADAEALTDSWEALSLDTEYWKLLLRQLEDCLILQTLLHSRASPPAAKASSPQTEPLPRLSVKKLLEGGKGGIADSVAKWIFKQDLSPELLKCANREKDVENPDEPREGIARSPPEVSEVETDLGAVPDLLRLAYEQFPCSLELDVLHAHCCWEYVVQWNKDPEEARFLVRSIEHLRHILNPHVQNGISLMMWNTFLVKRFSAATYLMDKVGKSPKDRLCRRDVGMSDTALTSFLGSCLDLLQTSLEADISRDEVQVPVLDTEDAWLSVEGPTSIVELALEQKPIHYPLVEHHSILCSILYAAMSFSLKSVKPLALFDSKGKNAFFKDLTSIQLLPSGEMDPNFISVRQQFLLKVVSAAVQAQHSKDKDPSARAADTHGQDLNWTALAVDLAHHLQVSEDVIRRHYVGELYSYGADLLGEEAILQVQDKEVLASQLLVLTGQRLAHALFHTQTKEGMELLARLPPTLCTWLKAMNPQDLQNTGVPVAATAKLVHKVMELLPEKHGQYSLALHLIEAVEAMATL.

Residues 31–69 (GALRRDPSKTSNWEDDSWGAWEETEPQEPEEEGNTSKTQ) are disordered. A Phosphoserine modification is found at S38. Residues 43 to 63 (WEDDSWGAWEETEPQEPEEEG) are compositionally biased toward acidic residues. S448 is modified (phosphoserine). The residue at position 899 (T899) is a Phosphothreonine. Phosphoserine is present on S914. The span at 959-973 (REKDVENPDEPREGI) shows a compositional bias: basic and acidic residues. Residues 959-982 (REKDVENPDEPREGIARSPPEVSE) form a disordered region. S976 is modified (phosphoserine).

Belongs to the Rab3-GAP regulatory subunit family. As to quaternary structure, the Rab3 GTPase-activating complex is a heterodimer composed of Rab3gap1 and Rab3gap2. The Rab3 GTPase-activating complex interacts with DMXL2. Interacts with LMAN1.

The protein resides in the cytoplasm. The protein localises to the endoplasmic reticulum. Functionally, regulatory subunit of the Rab3 GTPase-activating (Rab3GAP) complex composed of RAB3GAP1 and RAB3GAP2, which has GTPase-activating protein (GAP) activity towards various Rab3 subfamily members (RAB3A, RAB3B, RAB3C and RAB3D), RAB5A and RAB43, and guanine nucleotide exchange factor (GEF) activity towards RAB18. As part of the Rab3GAP complex, acts as a GAP for Rab3 proteins by converting active RAB3-GTP to the inactive form RAB3-GDP. Rab3 proteins are involved in regulated exocytosis of neurotransmitters and hormones. The Rab3GAP complex acts as a GEF for RAB18 by promoting the conversion of inactive RAB18-GDP to the active form RAB18-GTP. Recruits and stabilizes RAB18 at the cis-Golgi membrane in fibroblasts where RAB18 is most likely activated. Also involved in RAB18 recruitment at the endoplasmic reticulum (ER) membrane where it maintains proper ER structure. Required for normal eye and brain development. May participate in neurodevelopmental processes such as proliferation, migration and differentiation before synapse formation, and non-synaptic vesicular release of neurotransmitters. The polypeptide is Rab3 GTPase-activating protein non-catalytic subunit (Rattus norvegicus (Rat)).